Consider the following 89-residue polypeptide: Dynein light chain 2, cytoplasmic (89 aa).

Belongs to the dynein light chain family. Homodimer. The cytoplasmic dynein 1 complex consists of two catalytic heavy chains (HCs) and a number of non-catalytic subunits which present intermediate chains (ICs), light intermediate chains (LICs) and light chains (LCs); the composition seems to vary in respect to the IC, LIC and LC composition. The heavy chain homodimer serves as a scaffold for the probable homodimeric assembly of the respective non-catalytic subunits. Dynein ICs and LICs bind directly to the HC dimer and the LCs assemble on the IC dimer. Interacts with DYNC1I1. Interacts with BMF. Component of the myosin V motor complex. Interacts with BCAS1. Interacts with Basson/BSN. Interacts with AMBRA1 (via TQT motifs); tethering AMBRA1 to the cytoskeleton. Interacts with IQUB.

It is found in the cytoplasm. It localises to the cytoskeleton. Functionally, acts as one of several non-catalytic accessory components of the cytoplasmic dynein 1 complex that are thought to be involved in linking dynein to cargos and to adapter proteins that regulate dynein function. Cytoplasmic dynein 1 acts as a motor for the intracellular retrograde motility of vesicles and organelles along microtubules. May play a role in changing or maintaining the spatial distribution of cytoskeletal structures. The polypeptide is Dynein light chain 2, cytoplasmic (DYNLL2) (Homo sapiens (Human)).